Consider the following 88-residue polypeptide: Small ribosomal subunit protein uS15 (88 aa).

The segment covering 1-12 has biased composition (basic and acidic residues); that stretch reads MITQEEQQKIID. Residues 1–24 form a disordered region; the sequence is MITQEEQQKIIDRFGNGPNDTGTP.

It belongs to the universal ribosomal protein uS15 family. In terms of assembly, part of the 30S ribosomal subunit. Forms a bridge to the 50S subunit in the 70S ribosome, contacting the 23S rRNA.

Its function is as follows. One of the primary rRNA binding proteins, it binds directly to 16S rRNA where it helps nucleate assembly of the platform of the 30S subunit by binding and bridging several RNA helices of the 16S rRNA. Forms an intersubunit bridge (bridge B4) with the 23S rRNA of the 50S subunit in the ribosome. The sequence is that of Small ribosomal subunit protein uS15 from Salinibacter ruber (strain DSM 13855 / M31).